The following is a 633-amino-acid chain: Probable potassium transport system protein Kup 2 (633 aa).

The next 12 helical transmembrane spans lie at 18–38 (FLAM…TSPL), 61–81 (LISL…VLFL), 109–129 (LMFM…MITP), 145–165 (PAFH…LFAV), 173–193 (VSIF…AAGV), 211–231 (AVTF…AVFL), 255–275 (WFAV…ALVL), 287–307 (LMFP…ATII), 345–365 (IYLP…MFMF), 371–391 (LATA…VLAF), 405–425 (ATAV…ANLF), and 427–447 (IHDG…TMWT).

It belongs to the HAK/KUP transporter (TC 2.A.72) family.

The protein localises to the cell inner membrane. The enzyme catalyses K(+)(in) + H(+)(in) = K(+)(out) + H(+)(out). Transport of potassium into the cell. Likely operates as a K(+):H(+) symporter. This chain is Probable potassium transport system protein Kup 2, found in Sinorhizobium medicae (strain WSM419) (Ensifer medicae).